Here is a 220-residue protein sequence, read N- to C-terminus: MVENVTYSEDGQLLKLKWEDVYEQFKNLITFAARQQMENNGADTMMSRQDLEQEGLLKLYDCWEKWCFKENKQMDEFGPIFRKSLFRKVKQSGGTGRALGFVAIDDEDNPLENMLKDENTVDVVEKIHFSEGLEKLKETLESDIAKSLLEELINPSDQTIYNVLIDIERKKMLKSQGHRVNVPKDTTVRMKHIDQTLGISNKQYDSELKKFVKRLTIYTI.

In terms of biological role, sigma factors are initiation factors that promote the attachment of RNA polymerase to specific initiation sites and are then released. This sigma factor is responsible for the expression of the phage middle genes. This chain is RNA polymerase sigma GP28 factor (28), found in Bacillus subtilis (Bacteriophage SP01).